A 381-amino-acid chain; its full sequence is Homoserine O-succinyltransferase (381 aa).

Positions 45 to 360 constitute an AB hydrolase-1 domain; it reads NAVLVCHALN…PHGHDAFLLD (316 aa). The Nucleophile role is filled by Ser151. Substrate is bound at residue Arg221. Active-site residues include Asp321 and His354. Residue Asp355 coordinates substrate.

The protein belongs to the AB hydrolase superfamily. MetX family. In terms of assembly, homodimer.

It localises to the cytoplasm. It carries out the reaction L-homoserine + succinyl-CoA = O-succinyl-L-homoserine + CoA. Its pathway is amino-acid biosynthesis; L-methionine biosynthesis via de novo pathway; O-succinyl-L-homoserine from L-homoserine: step 1/1. Functionally, transfers a succinyl group from succinyl-CoA to L-homoserine, forming succinyl-L-homoserine. The polypeptide is Homoserine O-succinyltransferase (Burkholderia cenocepacia (strain ATCC BAA-245 / DSM 16553 / LMG 16656 / NCTC 13227 / J2315 / CF5610) (Burkholderia cepacia (strain J2315))).